A 620-amino-acid polypeptide reads, in one-letter code: Dihydroxy-acid dehydratase (620 aa).

Aspartate 81 serves as a coordination point for Mg(2+). Cysteine 122 provides a ligand contact to [2Fe-2S] cluster. Positions 123 and 124 each coordinate Mg(2+). Lysine 124 carries the N6-carboxylysine modification. Cysteine 195 lines the [2Fe-2S] cluster pocket. Glutamate 491 is a binding site for Mg(2+). Residue serine 517 is the Proton acceptor of the active site.

It belongs to the IlvD/Edd family. In terms of assembly, homodimer. [2Fe-2S] cluster is required as a cofactor. The cofactor is Mg(2+).

The catalysed reaction is (2R)-2,3-dihydroxy-3-methylbutanoate = 3-methyl-2-oxobutanoate + H2O. It catalyses the reaction (2R,3R)-2,3-dihydroxy-3-methylpentanoate = (S)-3-methyl-2-oxopentanoate + H2O. It participates in amino-acid biosynthesis; L-isoleucine biosynthesis; L-isoleucine from 2-oxobutanoate: step 3/4. Its pathway is amino-acid biosynthesis; L-valine biosynthesis; L-valine from pyruvate: step 3/4. Its function is as follows. Functions in the biosynthesis of branched-chain amino acids. Catalyzes the dehydration of (2R,3R)-2,3-dihydroxy-3-methylpentanoate (2,3-dihydroxy-3-methylvalerate) into 2-oxo-3-methylpentanoate (2-oxo-3-methylvalerate) and of (2R)-2,3-dihydroxy-3-methylbutanoate (2,3-dihydroxyisovalerate) into 2-oxo-3-methylbutanoate (2-oxoisovalerate), the penultimate precursor to L-isoleucine and L-valine, respectively. In Colwellia psychrerythraea (strain 34H / ATCC BAA-681) (Vibrio psychroerythus), this protein is Dihydroxy-acid dehydratase.